Reading from the N-terminus, the 156-residue chain is MPRKGYVAKRDVLPDPMYNSKLVSRLINRLMIDGKRGTASTILYDAFDIIKEETGNEPLEVFEEAMNNIMPVLEVKARRIGGSNYQVPIEVRPERRTTLGLRWLVSYARLRGEHTMDQRLAREIMDAANNTGAAVKKREDTHKMADANRAFAHYRW.

It belongs to the universal ribosomal protein uS7 family. As to quaternary structure, part of the 30S ribosomal subunit. Contacts proteins S9 and S11.

Functionally, one of the primary rRNA binding proteins, it binds directly to 16S rRNA where it nucleates assembly of the head domain of the 30S subunit. Is located at the subunit interface close to the decoding center, probably blocks exit of the E-site tRNA. The protein is Small ribosomal subunit protein uS7 of Latilactobacillus sakei subsp. sakei (strain 23K) (Lactobacillus sakei subsp. sakei).